Here is a 150-residue protein sequence, read N- to C-terminus: Large ribosomal subunit protein bL9 (150 aa).

This sequence belongs to the bacterial ribosomal protein bL9 family.

In terms of biological role, binds to the 23S rRNA. This Hamiltonella defensa subsp. Acyrthosiphon pisum (strain 5AT) protein is Large ribosomal subunit protein bL9.